The chain runs to 272 residues: Orotidine 5'-phosphate decarboxylase (272 aa).

The active-site Proton donor is K96.

The protein belongs to the OMP decarboxylase family. Type 2 subfamily.

It catalyses the reaction orotidine 5'-phosphate + H(+) = UMP + CO2. The protein operates within pyrimidine metabolism; UMP biosynthesis via de novo pathway; UMP from orotate: step 2/2. This is Orotidine 5'-phosphate decarboxylase from Phocaeicola vulgatus (strain ATCC 8482 / DSM 1447 / JCM 5826 / CCUG 4940 / NBRC 14291 / NCTC 11154) (Bacteroides vulgatus).